Here is a 138-residue protein sequence, read N- to C-terminus: Large ribosomal subunit protein uL16 (138 aa).

Basic residues predominate over residues 1-13; that stretch reads MLQPKRRKYRKEQ. Residues 1–24 form a disordered region; that stretch reads MLQPKRRKYRKEQKGRNTGKATRG.

It belongs to the universal ribosomal protein uL16 family. Part of the 50S ribosomal subunit.

Binds 23S rRNA and is also seen to make contacts with the A and possibly P site tRNAs. This Burkholderia lata (strain ATCC 17760 / DSM 23089 / LMG 22485 / NCIMB 9086 / R18194 / 383) protein is Large ribosomal subunit protein uL16.